A 101-amino-acid chain; its full sequence is NADH-quinone oxidoreductase subunit K (101 aa).

Helical transmembrane passes span 4-24 (LAHY…GIFL), 29-49 (IIII…NFVA), and 61-81 (IFVF…LAIL).

Belongs to the complex I subunit 4L family. In terms of assembly, NDH-1 is composed of 14 different subunits. Subunits NuoA, H, J, K, L, M, N constitute the membrane sector of the complex.

The protein localises to the cell inner membrane. It catalyses the reaction a quinone + NADH + 5 H(+)(in) = a quinol + NAD(+) + 4 H(+)(out). Its function is as follows. NDH-1 shuttles electrons from NADH, via FMN and iron-sulfur (Fe-S) centers, to quinones in the respiratory chain. The immediate electron acceptor for the enzyme in this species is believed to be ubiquinone. Couples the redox reaction to proton translocation (for every two electrons transferred, four hydrogen ions are translocated across the cytoplasmic membrane), and thus conserves the redox energy in a proton gradient. The protein is NADH-quinone oxidoreductase subunit K of Burkholderia vietnamiensis (strain G4 / LMG 22486) (Burkholderia cepacia (strain R1808)).